We begin with the raw amino-acid sequence, 1004 residues long: Bifunctional glutamine synthetase adenylyltransferase/adenylyl-removing enzyme (1004 aa).

The adenylyl removase stretch occupies residues 1–497 (MCCTTVVVVR…LHAKLFYQPL (497 aa)). The segment at 502–1004 (GPASLEIRHG…KTFVRKVFGS (503 aa)) is adenylyl transferase.

The protein belongs to the GlnE family. It depends on Mg(2+) as a cofactor.

It catalyses the reaction [glutamine synthetase]-O(4)-(5'-adenylyl)-L-tyrosine + phosphate = [glutamine synthetase]-L-tyrosine + ADP. The catalysed reaction is [glutamine synthetase]-L-tyrosine + ATP = [glutamine synthetase]-O(4)-(5'-adenylyl)-L-tyrosine + diphosphate. Functionally, involved in the regulation of glutamine synthetase GlnA, a key enzyme in the process to assimilate ammonia. When cellular nitrogen levels are high, the C-terminal adenylyl transferase (AT) inactivates GlnA by covalent transfer of an adenylyl group from ATP to specific tyrosine residue of GlnA, thus reducing its activity. Conversely, when nitrogen levels are low, the N-terminal adenylyl removase (AR) activates GlnA by removing the adenylyl group by phosphorolysis, increasing its activity. The regulatory region of GlnE binds the signal transduction protein PII (GlnB) which indicates the nitrogen status of the cell. The sequence is that of Bifunctional glutamine synthetase adenylyltransferase/adenylyl-removing enzyme from Mycobacterium leprae (strain TN).